A 398-amino-acid polypeptide reads, in one-letter code: Secreted aspartic protease 2 (398 aa).

The N-terminal stretch at 1–18 (MFLKNIFIALAIALLVDA) is a signal peptide. The propeptide at 19 to 56 (TPTTTKRSAGFVALDFSVVKTPKAFPVTNGQEGKTSKR) is activation peptide. Residues 70–384 (YAADITVGSN…DLDDNEISLA (315 aa)) form the Peptidase A1 domain. Aspartate 88 is a catalytic residue. 88–90 (DTG) contacts pepstatin A. Cysteines 103 and 115 form a disulfide. 141–142 (GD) provides a ligand contact to pepstatin A. Zn(2+)-binding residues include aspartate 247 and aspartate 270. Residue aspartate 274 is part of the active site. 274 to 278 (DSGTT) lines the pepstatin A pocket. Cysteine 312 and cysteine 350 are disulfide-bonded. N-linked (GlcNAc...) asparagine glycosylation is found at asparagine 313 and asparagine 321.

The protein belongs to the peptidase A1 family. In terms of assembly, monomer.

It is found in the secreted. It catalyses the reaction Preferential cleavage at the carboxyl of hydrophobic amino acids, but fails to cleave 15-Leu-|-Tyr-16, 16-Tyr-|-Leu-17 and 24-Phe-|-Phe-25 of insulin B chain. Activates trypsinogen, and degrades keratin.. Its function is as follows. Secreted aspartic peptidases (SAPs) are a group of ten acidic hydrolases considered as key virulence factors. These enzymes supply the fungus with nutrient amino acids as well as are able to degrade the selected host's proteins involved in the immune defense. Induces host inflammatory cytokine production in a proteolytic activity-independent way. Plays a role in tissue damage during superficial infection. Moreover, acts toward human hemoglobin though limited proteolysis to generate a variety of antimicrobial hemocidins, enabling to compete with the other microorganisms of the same physiological niche using the microbicidal peptides generated from the host protein. In terms of biological role, plays a key role in defense against host by cleaving histatin-5 (Hst 5), a peptide from human saliva that carries out fungicidal activity. The cleavage rate decreases in an order of SAP2 &gt; SAP9 &gt; SAP3 &gt; SAP7 &gt; SAP4 &gt; SAP1 &gt; SAP8. The first cleavage occurs between residues 'Lys-17' and 'His-18' of Hst 5, giving DSHAKRHHGYKRKFHEK and HHSHRGY peptides. Simultaneously, the DSHAKRHHGYKRK peptide is also formed. Further fragmentation by SAP2 results in FHEK and DSHAKRHHGY products. This Candida albicans (strain SC5314 / ATCC MYA-2876) (Yeast) protein is Secreted aspartic protease 2.